Consider the following 115-residue polypeptide: Large ribosomal subunit protein P2 (115 aa).

Met-1 carries the post-translational modification N-acetylmethionine. Ser-17 and Ser-19 each carry phosphoserine. Lys-21 carries the N6-acetyllysine; alternate modification. N6-succinyllysine; alternate is present on Lys-21. Low complexity predominate over residues Gly-78–Ala-90. The interval Gly-78 to Asp-115 is disordered. Residues Ser-79 and Ser-86 each carry the phosphoserine modification. The segment covering Ala-91 to Glu-101 has biased composition (basic and acidic residues). Residues Ser-102 and Ser-105 each carry the phosphoserine modification.

Belongs to the eukaryotic ribosomal protein P1/P2 family. As to quaternary structure, heterodimer with P1 at the lateral ribosomal stalk of the large ribosomal subunit.

Plays an important role in the elongation step of protein synthesis. The sequence is that of Large ribosomal subunit protein P2 (RPLP2) from Homo sapiens (Human).